The following is a 1219-amino-acid chain: MANLQVSGILEKFQMTGKDKDYRYMATSDLLNELNKDSFKIDLDLEVRLSSIILQQLDDVAGDVSGLAVKCLAPLVKKVGEERIVEMTNKLCDKLLHGKDQHRDTASIALRTVVAQIAPTLAPSILVTLTPQMIGGISGQGMSSGIKCECLEIMCDVVQKYGSLMTDDHEKLLNTLLLQLGCNQATVRKKTVTCIASLASSLSDDLLAKATVEVVKNLSNRNAKSEITRTNIQMIGALCRAVGYRFGTHLGNTVPVLINYCTSASENDEELREYSLQALESFLLRCPRDISPYCDEILNLTLEYISYDPNFTDNMEEDTDNETLEDEEDDESANEYTDDEDASWKVRRAAAKCLAGLIVSRSEMLTKVYQEACPKLIDRFKEREENVKMDVFNTFIDLLRQTGNVTKGQTDTDESSPKWLLKQEVSKIVKSINRQLREKSVKTKVGAFSVLRELVVVLPDCLADHIGSLVPGIERALNDKSSTSNLKIEALVFTKLVLASHAPPVFHPYIKALSSPVLAAVGERYYKVTAEALRVCGELVRVVRPSTAGMGFDFKPFVHPIYNAIMSRLTNQDQDQEVKECAITCMGLVISTFGDQLRAELPSCLPVLVDRMGNEITRLTAVKAFSVIATSPLHINLSCVLDHLIAELTGFLRKANRVLRQATLITMNTLVTAYGDKIGSEAYEVILVELSSLISVSDLHMTALALELCCTLMTGKSCSENISLAVRNKVLPQALTLVKSPLLQGQALLDLQKFFEALVYHANTSFYTLLESLLSCAKPSPQSGGVPKQALYSIAQCVAVLCLAAGDKNCSSTVKMLMEILKDDSGTNSAKQHLALLSLGEIGRRKDLSAHAGIETIVIESFQSPFEEIKSAASYALGNIAVGNLSNYLPFILDQIDNQQKKQYILLHSLKEVIVRQSVDKADFQNSSVEKILALLFNHCESEEEGVRNVVAECLGKMALIEPEKLVPALQVRTTSPAAFTRATVVTAVKYSVVERPEKLDEIIFPQISSFLMLIKDGDRHVRRAAVSALSTFAHYKPNLIKGLLPELLPLLYDQTVIKKELIRTVDLGPFKHVVDDGLELRKAAFECVFTLVDSCLDQVNPSSFIVPFLKSGLEDHYDLKMLCHLILSLLADKCPSAVLAVLDSLVEPLHKTISFKPKQDAVKQEHDRNEDMIRSALRAISSLDRINGVDYSHKFKGLMGDMKRSVPLWEKFQTIRNE.

An N-acetylalanine modification is found at alanine 2. HEAT repeat units follow at residues 44-81, 83-119, 209-244, 248-288, 327-363, 367-404, 423-460, 464-503, 599-636, 639-676, 808-848, 850-883, 927-964, 966-998, 1002-1039, 1043-1079, 1101-1137, and 1141-1180; these read DLEV…KVGE, RIVE…QIAP, KATV…AVGY, THLG…RCPR, EEDD…SRSE, KVYQ…QTGN, QEVS…VLPD, DHIG…SHAP, AELP…LHIN, CVLD…AYGD, KNCS…RKDL, AHAG…IAVG, SSVE…IEPE, LVPA…ERPE, EIIF…YKPN, GLLP…DDGL, NPSS…KCPS, and AVLD…ALRA. The tract at residues 311-340 is disordered; the sequence is FTDNMEEDTDNETLEDEEDDESANEYTDDE. A compositionally biased stretch (acidic residues) spans 314-340; the sequence is NMEEDTDNETLEDEEDDESANEYTDDE.

This sequence belongs to the CAND family. Interacts with CUL1 and CUL4. Binds unneddylated CUL1, but cannot bind CUL1 once it has been neddylated. In terms of tissue distribution, highly expressed in roots. Expressed in stems, flowers and siliques.

In terms of biological role, key assembly factor of SCF (SKP1-CUL1-F-box protein) E3 ubiquitin ligase complexes that promotes the exchange of the substrate-recognition F-box subunit in SCF complexes, thereby playing a key role in the cellular repertoire of SCF complexes. Acts as a F-box protein exchange factor. Required for SCF(TIR1) function. Modulates SCF(TIR1) function through its interactions with the CUL1 subunit. Represses photomorphogenesis by promoting HY5 degradation in darkness. The protein is Cullin-associated NEDD8-dissociated protein 1 (CAND1) of Arabidopsis thaliana (Mouse-ear cress).